The chain runs to 47 residues: Conotoxin Cal6.18 (47 aa).

A signal peptide spans Met-1 to Ala-19.

It belongs to the conotoxin O1 superfamily. May contain 3 disulfide bonds. As to expression, expressed by the venom duct.

It is found in the secreted. In terms of biological role, probable neurotoxin. This is Conotoxin Cal6.18 from Californiconus californicus (California cone).